We begin with the raw amino-acid sequence, 90 residues long: UPF0297 protein BH1268 (90 aa).

Belongs to the UPF0297 family.

This is UPF0297 protein BH1268 from Halalkalibacterium halodurans (strain ATCC BAA-125 / DSM 18197 / FERM 7344 / JCM 9153 / C-125) (Bacillus halodurans).